The sequence spans 184 residues: Trypsin/chymotrypsin inhibitor (184 aa).

Intrachain disulfides connect C39-C84 and C136-C147.

Belongs to the protease inhibitor I3 (leguminous Kunitz-type inhibitor) family. Homodimer.

In terms of biological role, inhibits trypsin and alpha-chymotrypsin. This chain is Trypsin/chymotrypsin inhibitor, found in Alocasia macrorrhizos (Giant taro).